The primary structure comprises 194 residues: 7-methyl-GTP pyrophosphatase (194 aa).

The active-site Proton acceptor is the aspartate 70.

The protein belongs to the Maf family. YceF subfamily. A divalent metal cation serves as cofactor.

Its subcellular location is the cytoplasm. It carries out the reaction N(7)-methyl-GTP + H2O = N(7)-methyl-GMP + diphosphate + H(+). In terms of biological role, nucleoside triphosphate pyrophosphatase that hydrolyzes 7-methyl-GTP (m(7)GTP). May have a dual role in cell division arrest and in preventing the incorporation of modified nucleotides into cellular nucleic acids. The chain is 7-methyl-GTP pyrophosphatase from Ralstonia nicotianae (strain ATCC BAA-1114 / GMI1000) (Ralstonia solanacearum).